Consider the following 895-residue polypeptide: WD repeat-containing protein 36 (895 aa).

WD repeat units follow at residues 30 to 63 (VVRF…LVAV), 72 to 101 (CCMA…IVHT), 110 to 143 (HFLQ…LQLT), 152 to 186 (SAIL…LLYT), 193 to 230 (GVTA…MKFR), 237 to 272 (TSIS…INQM), 277 to 320 (STAI…RFRM), and 327 to 361 (TNIR…FNKS). Phosphoserine occurs at positions 382 and 399. WD repeat units lie at residues 389–428 (TKFA…GAYF), 441–475 (ATAV…HRGS), 486–522 (VRGV…HSVS), 527–562 (PNIM…VREF), 564–605 (GHQG…DCFL), and 607–645 (DSAP…SVVS).

In terms of assembly, part of the small subunit (SSU) processome, composed of more than 70 proteins and the RNA chaperone small nucleolar RNA (snoRNA) U3. In terms of tissue distribution, expressed in heart, placenta, liver, skeletal muscle, kidney and pancreas. In ocular tissues, strong expression in iris, sclera, ciliary muscle, ciliary body, retina and optic nerve.

Its subcellular location is the nucleus. The protein resides in the nucleolus. In terms of biological role, part of the small subunit (SSU) processome, first precursor of the small eukaryotic ribosomal subunit. During the assembly of the SSU processome in the nucleolus, many ribosome biogenesis factors, an RNA chaperone and ribosomal proteins associate with the nascent pre-rRNA and work in concert to generate RNA folding, modifications, rearrangements and cleavage as well as targeted degradation of pre-ribosomal RNA by the RNA exosome. Involved in the nucleolar processing of SSU 18S rRNA. Involved in T-cell activation and highly coregulated with IL2. In Homo sapiens (Human), this protein is WD repeat-containing protein 36.